Consider the following 398-residue polypeptide: Serpin-Z1C (398 aa).

The tract at residues G343–F367 is RCL.

This sequence belongs to the serpin family.

Inhibits chymotrypsin and cathepsin G in vitro. In Triticum aestivum (Wheat), this protein is Serpin-Z1C.